A 231-amino-acid chain; its full sequence is Ribonuclease 3 (231 aa).

Residues 1 to 134 (MKTLEKKLAE…FLGALLLDAG (134 aa)) enclose the RNase III domain. Glu47 contacts Mg(2+). Asp51 is an active-site residue. Positions 120 and 123 each coordinate Mg(2+). Residue Glu123 is part of the active site. A DRBM domain is found at 160 to 229 (DYKTALQELL…AKNALEKLQR (70 aa)).

The protein belongs to the ribonuclease III family. As to quaternary structure, homodimer. The cofactor is Mg(2+).

The protein resides in the cytoplasm. The catalysed reaction is Endonucleolytic cleavage to 5'-phosphomonoester.. Digests double-stranded RNA. Involved in the processing of primary rRNA transcript to yield the immediate precursors to the large and small rRNAs (23S and 16S). Also processes some mRNAs, and tRNAs when they are encoded in the rRNA operon. Functionally, CRISPR (clustered regularly interspaced short palindromic repeat) is an adaptive immune system that provides protection against mobile genetic elements (viruses, transposable elements and conjugative plasmids). CRISPR clusters contain spacers, sequences complementary to antecedent mobile elements, and target invading nucleic acids. CRISPR clusters are transcribed and processed into CRISPR RNA (crRNA). In this organism endogenous ribonuclease 3 and Cas9 are required for correct coprocessing of pre-crRNA and the trans-encoded small RNA (tracrRNA). Cas9, crRNA and tracrRNA are required for cleavage of invading DNA. Complements pre-crRNA and tracrRNA coprocessing defects in an rnc deletion in S.pyogenes strain 370. This chain is Ribonuclease 3, found in Streptococcus mutans serotype c (strain ATCC 700610 / UA159).